The sequence spans 154 residues: tRNA (cytidine(34)-2'-O)-methyltransferase (154 aa).

Positions 78, 100, 122, and 130 each coordinate S-adenosyl-L-methionine.

It belongs to the class IV-like SAM-binding methyltransferase superfamily. RNA methyltransferase TrmH family. TrmL subfamily. Homodimer.

Its subcellular location is the cytoplasm. The catalysed reaction is cytidine(34) in tRNA + S-adenosyl-L-methionine = 2'-O-methylcytidine(34) in tRNA + S-adenosyl-L-homocysteine + H(+). It catalyses the reaction 5-carboxymethylaminomethyluridine(34) in tRNA(Leu) + S-adenosyl-L-methionine = 5-carboxymethylaminomethyl-2'-O-methyluridine(34) in tRNA(Leu) + S-adenosyl-L-homocysteine + H(+). In terms of biological role, methylates the ribose at the nucleotide 34 wobble position in the two leucyl isoacceptors tRNA(Leu)(CmAA) and tRNA(Leu)(cmnm5UmAA). Catalyzes the methyl transfer from S-adenosyl-L-methionine to the 2'-OH of the wobble nucleotide. This Methylovorus glucosotrophus (strain SIP3-4) protein is tRNA (cytidine(34)-2'-O)-methyltransferase.